The primary structure comprises 899 residues: Semaphorin-1A (899 aa).

Residues 1–20 (MLNSHNTNHNNNSASNSNYN) show a composition bias toward low complexity. The segment at 1-24 (MLNSHNTNHNNNSASNSNYNKGHK) is disordered. Residues 1–40 (MLNSHNTNHNNNSASNSNYNKGHKMHLKSATAKATIMKHK) lie on the Cytoplasmic side of the membrane. A helical membrane pass occupies residues 41–61 (LSKFYGYGWMQVFLLLTVLVI). At 62–657 (GNQSAWQENI…INAQYTVETL (596 aa)) the chain is on the extracellular side. 3 N-linked (GlcNAc...) asparagine glycosylation sites follow: Asn-63, Asn-90, and Asn-117. In terms of domain architecture, Sema spans 74-543 (KLYVELGPED…TDSQVVAIQL (470 aa)). Disulfide bonds link Cys-141–Cys-151 and Cys-169–Cys-178. 3 N-linked (GlcNAc...) asparagine glycosylation sites follow: Asn-187, Asn-207, and Asn-311. Intrachain disulfides connect Cys-288-Cys-402 and Cys-312-Cys-361. Asn-404 is a glycosylation site (N-linked (GlcNAc...) asparagine). The chain crosses the membrane as a helical span at residues 658-678 (VMAVLAGSIFSLLVGFFTGYF). Residues 679–899 (CGRRCHKDED…PKNCSYIYRD (221 aa)) lie on the Cytoplasmic side of the membrane. 2 disordered regions span residues 735-766 (VLLP…QGPN) and 798-899 (VMGD…IYRD). Positions 809-827 (FSTTRSVKKAVNNTNTRNR) are enriched in polar residues. Residues 828–837 (SLGRARRQPP) are compositionally biased toward basic residues. The segment covering 847–876 (SNSPQQQQQQSQQPHSSSGSSPVMSNSSSS) has biased composition (low complexity).

This sequence belongs to the semaphorin family. In terms of tissue distribution, expressed by subsets of neurons and muscles.

The protein localises to the cell membrane. In terms of biological role, involved in growth cone guidance through its role in axonal repulsion. Function in neurons is essential for adult survival, motor neuron survival, and is important for climbing behavior and activity. This Drosophila melanogaster (Fruit fly) protein is Semaphorin-1A.